Consider the following 541-residue polypeptide: Chaperonin GroEL (541 aa).

ATP contacts are provided by residues 29-32 (TLGP), 86-90 (DGTTT), Gly413, 477-479 (DAL), and Asp493.

It belongs to the chaperonin (HSP60) family. In terms of assembly, forms a cylinder of 14 subunits composed of two heptameric rings stacked back-to-back. Interacts with the co-chaperonin GroES.

The protein resides in the cytoplasm. The enzyme catalyses ATP + H2O + a folded polypeptide = ADP + phosphate + an unfolded polypeptide.. Functionally, together with its co-chaperonin GroES, plays an essential role in assisting protein folding. The GroEL-GroES system forms a nano-cage that allows encapsulation of the non-native substrate proteins and provides a physical environment optimized to promote and accelerate protein folding. In Clostridium botulinum (strain 657 / Type Ba4), this protein is Chaperonin GroEL.